We begin with the raw amino-acid sequence, 218 residues long: MPGLTIGDTVPNLELDSTHGKIRIHDYVGNGYVILFSHPGDFTPVCTTELAAMANYAKEFEKRGVKLLGISCDDVQSHKEWTKDIEAYKPGSKVTYPIMADPDRSAIKQLNMVDPDEKDAEGQLPSRTLHIVGPDKKVKLSFLYPSCTGRNMDEVVRAVDSLLTAAKHKVATPANWNPGECVVIAPGVSDDEAKKMFPQGFETADLPSKKGYLRFTKV.

Positions 4 to 164 constitute a Thioredoxin domain; that stretch reads LTIGDTVPNL…VVRAVDSLLT (161 aa). C46 serves as the catalytic Cysteine sulfenic acid (-SOH) intermediate. A Bipartite nuclear localization signal motif is present at residues 194-217; it reads KKMFPQGFETADLPSKKGYLRFTK.

This sequence belongs to the peroxiredoxin family. Prx6 subfamily.

It localises to the nucleus. Its subcellular location is the cytoplasm. The enzyme catalyses a hydroperoxide + [thioredoxin]-dithiol = an alcohol + [thioredoxin]-disulfide + H2O. Thiol-specific peroxidase that catalyzes the reduction of hydrogen peroxide and organic hydroperoxides to water and alcohols, respectively. Seems to contribute to the inhibition of germination during stress. In Triticum aestivum (Wheat), this protein is 1-Cys peroxiredoxin PER1 (PER1).